The sequence spans 571 residues: Glutamine--tRNA ligase (571 aa).

The 'HIGH' region signature appears at 35-45 (PEPNGYLHIGH). ATP-binding positions include 36 to 38 (EPN) and 42 to 48 (HIGHAKS). L-glutamine is bound by residues D68 and Y213. ATP is bound by residues T232, 262 to 263 (RL), and 270 to 272 (LSK). Positions 269-273 (ILSKR) match the 'KMSKS' region motif.

The protein belongs to the class-I aminoacyl-tRNA synthetase family. In terms of assembly, monomer.

The protein localises to the cytoplasm. The enzyme catalyses tRNA(Gln) + L-glutamine + ATP = L-glutaminyl-tRNA(Gln) + AMP + diphosphate. The polypeptide is Glutamine--tRNA ligase (Buchnera aphidicola subsp. Acyrthosiphon pisum (strain APS) (Acyrthosiphon pisum symbiotic bacterium)).